Here is a 216-residue protein sequence, read N- to C-terminus: DNA-directed RNA polymerase subunit alpha (216 aa).

The protein belongs to the RNA polymerase alpha chain family. As to quaternary structure, in plastids the minimal PEP RNA polymerase catalytic core is composed of four subunits: alpha, beta, beta', and beta''. When a (nuclear-encoded) sigma factor is associated with the core the holoenzyme is formed, which can initiate transcription.

The protein localises to the plastid. It is found in the chloroplast. The enzyme catalyses RNA(n) + a ribonucleoside 5'-triphosphate = RNA(n+1) + diphosphate. Functionally, DNA-dependent RNA polymerase catalyzes the transcription of DNA into RNA using the four ribonucleoside triphosphates as substrates. This is DNA-directed RNA polymerase subunit alpha (rpoA) from Euglena gracilis.